We begin with the raw amino-acid sequence, 493 residues long: Beta-amyrin 11-oxidase (493 aa).

A helical membrane pass occupies residues 7–23; it reads CMSAATLLVCYIFGSKF. Residue Cys-439 coordinates heme.

The protein belongs to the cytochrome P450 family. It depends on heme as a cofactor. In terms of tissue distribution, expressed in roots and stolons. Not detected in leaves and stems.

It is found in the membrane. It catalyses the reaction beta-amyrin + 2 reduced [NADPH--hemoprotein reductase] + 2 O2 = 11-oxo-beta-amyrin + 2 oxidized [NADPH--hemoprotein reductase] + 3 H2O + 2 H(+). It carries out the reaction beta-amyrin + reduced [NADPH--hemoprotein reductase] + O2 = 11alpha-hydroxy-beta-amyrin + oxidized [NADPH--hemoprotein reductase] + H2O + H(+). The enzyme catalyses 11alpha-hydroxy-beta-amyrin + reduced [NADPH--hemoprotein reductase] + O2 = 11-oxo-beta-amyrin + oxidized [NADPH--hemoprotein reductase] + 2 H2O + H(+). Functionally, involved in the biosynthesis of Glycyrrhetinic acid (GA), a natural product which exhibits anti-inflammatory activity. Catalyzes 2 successive oxidations of beta-amyrin, producing a precursor of the triterpene sweetener glycyrrhizin. Unable to use 11-deoxoglycyrrhetinic acid or ent-kaurenoic acid as substrates. This chain is Beta-amyrin 11-oxidase, found in Glycyrrhiza uralensis (Chinese licorice).